The chain runs to 330 residues: Stearoyl-CoA desaturase 5 (330 aa).

Over 1–49 the chain is Cytoplasmic; sequence MPGPATDAGKIPFCDAKEEIRAGLESSEGGGGPERPGARGQRQNIVWRN. Asparagine 49 is a substrate binding site. Residues 50–70 traverse the membrane as a helical segment; that stretch reads VVLMSLLHLGAVYSLVLIPKA. The Lumenal segment spans residues 71–72; the sequence is KP. The chain crosses the membrane as a helical span at residues 73-93; it reads LTLLWAYFCFLLAALGVTAGA. Histidine 94 and histidine 99 together coordinate Fe cation. Positions 94-99 match the Histidine box-1 motif; the sequence is HRLWSH. Over 94–193 the chain is Cytoplasmic; it reads HRLWSHRSYR…VVRIQRKYYK (100 aa). Substrate contacts are provided by asparagine 122, arginine 129, and aspartate 130. Residues histidine 131, histidine 134, and histidine 135 each contribute to the Fe cation site. A Histidine box-2 motif is present at residues 131–135; sequence HRAHH. Arginine 162 and lysine 163 together coordinate substrate. A helical membrane pass occupies residues 194–214; sequence ISVVLMCFVVPTLVPWYIWGE. A topological domain (lumenal) is located at residue serine 215. Residues 216-238 traverse the membrane as a helical segment; that stretch reads LWNSYFLASILRYTISLNISWLV. A substrate-binding site is contributed by tryptophan 236. Over 239–330 the chain is Cytoplasmic; that stretch reads NSAAHMYGNR…RKARTGDSSA (92 aa). The Fe cation site is built by histidine 243, histidine 272, histidine 275, and histidine 276. The short motif at 272-276 is the Histidine box-3 element; sequence HNYHH.

It belongs to the fatty acid desaturase type 1 family. In terms of assembly, may self-associate and form homodimers. Requires Fe(2+) as cofactor. In terms of tissue distribution, detected in fetal brain, and at lower levels in fetal kidney. Detected in adult brain and pancreas, and at lower levels in kidney and lung. Expressed in spiral ganglion cells and the organ of Corti of fetal cochlea.

The protein resides in the endoplasmic reticulum membrane. The enzyme catalyses octadecanoyl-CoA + 2 Fe(II)-[cytochrome b5] + O2 + 2 H(+) = (9Z)-octadecenoyl-CoA + 2 Fe(III)-[cytochrome b5] + 2 H2O. The catalysed reaction is hexadecanoyl-CoA + 2 Fe(II)-[cytochrome b5] + O2 + 2 H(+) = (9Z)-hexadecenoyl-CoA + 2 Fe(III)-[cytochrome b5] + 2 H2O. Its function is as follows. Stearoyl-CoA desaturase that utilizes O(2) and electrons from reduced cytochrome b5 to introduce the first double bond into saturated fatty acyl-CoA substrates. Catalyzes the insertion of a cis double bond at the delta-9 position into fatty acyl-CoA substrates including palmitoyl-CoA and stearoyl-CoA. Gives rise to a mixture of 16:1 and 18:1 unsaturated fatty acids. Involved in neuronal cell proliferation and differentiation through down-regulation of EGFR/AKT/MAPK and Wnt signaling pathways. The sequence is that of Stearoyl-CoA desaturase 5 (SCD5) from Homo sapiens (Human).